A 128-amino-acid polypeptide reads, in one-letter code: Lutropin subunit beta (128 aa).

A signal peptide spans 1-20 (MERLQGLLLWLLLSPSVVWA). 5 cysteine pairs are disulfide-bonded: cysteine 29–cysteine 77, cysteine 43–cysteine 92, cysteine 54–cysteine 108, cysteine 58–cysteine 110, and cysteine 113–cysteine 120. N-linked (GlcNAc...) asparagine glycosylation is present at asparagine 33.

This sequence belongs to the glycoprotein hormones subunit beta family. As to quaternary structure, heterodimer of a common alpha chain and a unique beta chain which confers biological specificity to thyrotropin, lutropin, follitropin and gonadotropin.

It is found in the secreted. In terms of biological role, promotes spermatogenesis and ovulation by stimulating the testes and ovaries to synthesize steroids. The chain is Lutropin subunit beta (LHB) from Phodopus sungorus (Striped hairy-footed hamster).